The chain runs to 652 residues: DNA ligase (652 aa).

Residues 29 to 33 (DAEYD), 78 to 79 (SL), and Glu107 each bind NAD(+). Lys109 functions as the N6-AMP-lysine intermediate in the catalytic mechanism. Residues Arg130, Glu164, Lys278, and Lys302 each contribute to the NAD(+) site. Zn(2+) is bound by residues Cys395, Cys398, Cys413, and Cys418. Residues 577–652 (ADDAILSGKT…VKDEAWLLDL (76 aa)) enclose the BRCT domain.

This sequence belongs to the NAD-dependent DNA ligase family. LigA subfamily. The cofactor is Mg(2+). Mn(2+) is required as a cofactor.

It carries out the reaction NAD(+) + (deoxyribonucleotide)n-3'-hydroxyl + 5'-phospho-(deoxyribonucleotide)m = (deoxyribonucleotide)n+m + AMP + beta-nicotinamide D-nucleotide.. DNA ligase that catalyzes the formation of phosphodiester linkages between 5'-phosphoryl and 3'-hydroxyl groups in double-stranded DNA using NAD as a coenzyme and as the energy source for the reaction. It is essential for DNA replication and repair of damaged DNA. This is DNA ligase from Streptococcus thermophilus (strain CNRZ 1066).